The following is a 162-amino-acid chain: Caveolin-2 (162 aa).

Topologically, residues 1 to 86 (MGLETEKADV…FEISKYVVYK (86 aa)) are cytoplasmic. At Tyr19 the chain carries Phosphotyrosine; by SRC. Ser20 and Ser23 each carry phosphoserine. Tyr27 bears the Phosphotyrosine; by SRC mark. Position 36 is a phosphoserine (Ser36). Residues 87–107 (FLTVFLAIPLAFAAGILFATL) constitute an intramembrane region (helical). The Cytoplasmic portion of the chain corresponds to 108 to 162 (SCLHIWIIMPFVKTCLMVLPSVQTVWKTVTDVVIAPLCASVGRSFSSVSLQLSHD).

This sequence belongs to the caveolin family. Monomer or homodimer. Interacts with CAV1; the interaction forms a stable heterooligomeric complex that is required for targeting to lipid rafts and for caveolae formation. Tyrosine phosphorylated forms do not form heterooligomers with the Tyr-19-phosphorylated form existing as a monomer or dimer, and the Tyr-27-form as a monomer only. Interacts (tyrosine phosphorylated form) with the SH2 domain-containing proteins, RASA1, NCK1 and SRC. Interacts (tyrosine phosphorylated form) with INSR, the interaction (Tyr-27-phosphorylated form) is increased on insulin stimulation. Interacts (Tyr-19 phosphorylated form) with MAPK1 (phosphorylated form); the interaction, promoted by insulin, leads to nuclear location and MAPK1 activation. Interacts with STAT3; the interaction is increased on insulin-induced tyrosine phosphorylation leading to STAT activation. Phosphorylated on serine and tyrosine residues. CAV1 promotes phosphorylation on Ser-23 which then targets the complex to the plasma membrane, lipid rafts and caveolae. Phosphorylation on Ser-36 appears to modulate mitosis in endothelial cells. Phosphorylation on both Tyr-19 and Tyr-27 is required for insulin-induced 'Ser-727' phosphorylation of STAT3 and its activation. Phosphorylation on Tyr-19 is required for insulin-induced phosphorylation of MAPK1 and DNA binding of STAT3. Tyrosine phosphorylation is induced by both EGF and insulin (By. similarity).

It localises to the nucleus. The protein resides in the cytoplasm. The protein localises to the golgi apparatus membrane. It is found in the cell membrane. Its subcellular location is the membrane. It localises to the caveola. May act as a scaffolding protein within caveolar membranes. Interacts directly with G-protein alpha subunits and can functionally regulate their activity. Acts as an accessory protein in conjunction with CAV1 in targeting to lipid rafts and driving caveolae formation. The Ser-36 phosphorylated form has a role in modulating mitosis in endothelial cells. Positive regulator of cellular mitogenesis of the MAPK signaling pathway. Required for the insulin-stimulated nuclear translocation and activation of MAPK1 and STAT3, and the subsequent regulation of cell cycle progression. The protein is Caveolin-2 (CAV2) of Loxodonta africana (African elephant).